Reading from the N-terminus, the 76-residue chain is uncharacterized protein (76 aa).

To M.jannaschii MJ0857 N-terminal region.

This is an uncharacterized protein from Methanocaldococcus jannaschii (strain ATCC 43067 / DSM 2661 / JAL-1 / JCM 10045 / NBRC 100440) (Methanococcus jannaschii).